Consider the following 612-residue polypeptide: Elongation factor 4 (612 aa).

Positions 11–193 (KHIRNFSIVA…EIVKKVPAPD (183 aa)) constitute a tr-type G domain. Residues 23 to 28 (DHGKST) and 140 to 143 (NKID) each bind GTP.

It belongs to the TRAFAC class translation factor GTPase superfamily. Classic translation factor GTPase family. LepA subfamily.

Its subcellular location is the cell membrane. The catalysed reaction is GTP + H2O = GDP + phosphate + H(+). Required for accurate and efficient protein synthesis under certain stress conditions. May act as a fidelity factor of the translation reaction, by catalyzing a one-codon backward translocation of tRNAs on improperly translocated ribosomes. Back-translocation proceeds from a post-translocation (POST) complex to a pre-translocation (PRE) complex, thus giving elongation factor G a second chance to translocate the tRNAs correctly. Binds to ribosomes in a GTP-dependent manner. The chain is Elongation factor 4 from Lactobacillus johnsonii (strain CNCM I-12250 / La1 / NCC 533).